The following is a 135-amino-acid chain: Class I hydrophobin dewB (135 aa).

The N-terminal stretch at Met-1 to Ala-17 is a signal peptide. Disulfide bonds link Cys-35-Cys-109, Cys-43-Cys-103, Cys-44-Cys-84, and Cys-110-Cys-128.

It belongs to the fungal hydrophobin family. In terms of assembly, self-assembles to form functional amyloid fibrils called rodlets. Self-assembly into fibrillar rodlets occurs spontaneously at hydrophobic:hydrophilic interfaces and the rodlets further associate laterally to form amphipathic monolayers.

The protein resides in the secreted. It localises to the spore wall. Aerial growth, conidiation, and dispersal of filamentous fungi in the environment rely upon a capability of their secreting small amphipathic proteins called hydrophobins (HPBs) with low sequence identity. Class I can self-assemble into an outermost layer of rodlet bundles on aerial cell surfaces, conferring cellular hydrophobicity that supports fungal growth, development and dispersal; whereas Class II form highly ordered films at water-air interfaces through intermolecular interactions but contribute nothing to the rodlet structure. DewB is a class I hydrophobin that contributes to the hydrophobicity of the spore surface. The protein is Class I hydrophobin dewB of Emericella nidulans (strain FGSC A4 / ATCC 38163 / CBS 112.46 / NRRL 194 / M139) (Aspergillus nidulans).